The sequence spans 65 residues: MQGRVKWFNAEKGFGFIEREDGDDVFVHFSAIQQDGYKSLEEGQQVEFDIVDGARGPQAANVVKL.

In terms of domain architecture, CSD spans 3 to 62; sequence GRVKWFNAEKGFGFIEREDGDDVFVHFSAIQQDGYKSLEEGQQVEFDIVDGARGPQAANV.

Homodimer.

The protein resides in the cytoplasm. This chain is Cold shock-like protein CspC (cspC), found in Bacillus cereus.